A 326-amino-acid polypeptide reads, in one-letter code: Beta-ketoacyl-[acyl-carrier-protein] synthase III (326 aa).

Residues cysteine 111 and histidine 252 contribute to the active site. The tract at residues 253–257 (QANIR) is ACP-binding. The active site involves asparagine 282.

Belongs to the thiolase-like superfamily. FabH family. As to quaternary structure, homodimer.

The protein localises to the plastid. It localises to the chloroplast. It carries out the reaction malonyl-[ACP] + acetyl-CoA + H(+) = 3-oxobutanoyl-[ACP] + CO2 + CoA. It functions in the pathway lipid metabolism; fatty acid biosynthesis. Functionally, catalyzes the condensation reaction of fatty acid synthesis by the addition to an acyl acceptor of two carbons from malonyl-ACP. Catalyzes the first condensation reaction which initiates fatty acid synthesis and may therefore play a role in governing the total rate of fatty acid production. Possesses both acetoacetyl-ACP synthase and acetyl transacylase activities. Its substrate specificity determines the biosynthesis of branched-chain and/or straight-chain of fatty acids. This Porphyra purpurea (Red seaweed) protein is Beta-ketoacyl-[acyl-carrier-protein] synthase III.